The sequence spans 351 residues: tRNA uridine(34) hydroxylase (351 aa).

Residues 146–240 (DDPQALFVDM…YARRAREQGL (95 aa)) form the Rhodanese domain. The active-site Cysteine persulfide intermediate is the cysteine 200.

Belongs to the TrhO family.

The catalysed reaction is uridine(34) in tRNA + AH2 + O2 = 5-hydroxyuridine(34) in tRNA + A + H2O. In terms of biological role, catalyzes oxygen-dependent 5-hydroxyuridine (ho5U) modification at position 34 in tRNAs. This Sodalis glossinidius (strain morsitans) protein is tRNA uridine(34) hydroxylase.